Consider the following 270-residue polypeptide: tRNA pseudouridine synthase A (270 aa).

Asp-51 serves as the catalytic Nucleophile. Substrate is bound at residue Tyr-109.

Belongs to the tRNA pseudouridine synthase TruA family. As to quaternary structure, homodimer.

It carries out the reaction uridine(38/39/40) in tRNA = pseudouridine(38/39/40) in tRNA. In terms of biological role, formation of pseudouridine at positions 38, 39 and 40 in the anticodon stem and loop of transfer RNAs. The polypeptide is tRNA pseudouridine synthase A (Burkholderia mallei (strain ATCC 23344)).